The chain runs to 446 residues: Alkylglycerol monooxygenase (446 aa).

2 consecutive transmembrane segments (helical) span residues Val-39–Leu-59 and Phe-103–Val-123. A Fatty acid hydroxylase domain is found at Trp-117–Thr-248. The Histidine box-1 motif lies at His-131–His-135. The Histidine box-2 signature appears at His-144–His-148. The chain crosses the membrane as a helical span at residues Phe-167–Val-187. A Histidine box-3 motif is present at residues His-220–His-224. 3 helical membrane passes run Ala-329–Tyr-349, Leu-362–Ile-382, and Pro-410–Trp-430.

It belongs to the sterol desaturase family. TMEM195 subfamily. The cofactor is Fe cation.

It is found in the endoplasmic reticulum membrane. The enzyme catalyses 1-O-(1,2-saturated-alkyl)-sn-glycerol + (6R)-L-erythro-5,6,7,8-tetrahydrobiopterin + O2 = a 1-(1-hydroxyalkyl)-sn-glycerol + (6R)-L-erythro-6,7-dihydrobiopterin + H2O. Glyceryl-ether monooxygenase that cleaves the O-alkyl bond of ether lipids. Ether lipids are essential components of brain membranes. This Danio rerio (Zebrafish) protein is Alkylglycerol monooxygenase (agmo).